The chain runs to 232 residues: 2-C-methyl-D-erythritol 4-phosphate cytidylyltransferase (232 aa).

Belongs to the IspD/TarI cytidylyltransferase family. IspD subfamily.

It catalyses the reaction 2-C-methyl-D-erythritol 4-phosphate + CTP + H(+) = 4-CDP-2-C-methyl-D-erythritol + diphosphate. The protein operates within isoprenoid biosynthesis; isopentenyl diphosphate biosynthesis via DXP pathway; isopentenyl diphosphate from 1-deoxy-D-xylulose 5-phosphate: step 2/6. Catalyzes the formation of 4-diphosphocytidyl-2-C-methyl-D-erythritol from CTP and 2-C-methyl-D-erythritol 4-phosphate (MEP). The chain is 2-C-methyl-D-erythritol 4-phosphate cytidylyltransferase from Vibrio cholerae serotype O1 (strain ATCC 39315 / El Tor Inaba N16961).